A 138-amino-acid polypeptide reads, in one-letter code: Large ribosomal subunit protein uL16 (138 aa).

The segment covering M1–Q13 has biased composition (basic residues). The tract at residues M1–G24 is disordered.

Belongs to the universal ribosomal protein uL16 family. Part of the 50S ribosomal subunit.

In terms of biological role, binds 23S rRNA and is also seen to make contacts with the A and possibly P site tRNAs. This is Large ribosomal subunit protein uL16 from Burkholderia multivorans (strain ATCC 17616 / 249).